The following is an 801-amino-acid chain: Sucrose synthase isoform 2 (801 aa).

The interval 271-748 (MIFNVVILSP…GLKRIQEKYT (478 aa)) is GT-B glycosyltransferase.

It belongs to the glycosyltransferase 1 family. Plant sucrose synthase subfamily. In terms of assembly, homotetramer. As to expression, exclusively expressed in flowers.

It carries out the reaction an NDP-alpha-D-glucose + D-fructose = a ribonucleoside 5'-diphosphate + sucrose + H(+). In terms of biological role, sucrose-cleaving enzyme that provides UDP-glucose and fructose for various metabolic pathways. In Daucus carota (Wild carrot), this protein is Sucrose synthase isoform 2.